Consider the following 799-residue polypeptide: Elongation factor G, mitochondrial (799 aa).

A mitochondrion-targeting transit peptide spans 1–24 (MRCPSLARLPHRAVSGLTRTPVRF). One can recognise a tr-type G domain in the interval 97–384 (SRVRNIGIAA…GVIDYLPNPS (288 aa)). Residues 106–113 (AHIDSGKT), 182–186 (DTPGH), and 236–239 (NKMD) each bind GTP.

Belongs to the TRAFAC class translation factor GTPase superfamily. Classic translation factor GTPase family. EF-G/EF-2 subfamily.

The protein resides in the mitochondrion. Its pathway is protein biosynthesis; polypeptide chain elongation. Functionally, mitochondrial GTPase that catalyzes the GTP-dependent ribosomal translocation step during translation elongation. During this step, the ribosome changes from the pre-translocational (PRE) to the post-translocational (POST) state as the newly formed A-site-bound peptidyl-tRNA and P-site-bound deacylated tRNA move to the P and E sites, respectively. Catalyzes the coordinated movement of the two tRNA molecules, the mRNA and conformational changes in the ribosome. The polypeptide is Elongation factor G, mitochondrial (mef1) (Emericella nidulans (strain FGSC A4 / ATCC 38163 / CBS 112.46 / NRRL 194 / M139) (Aspergillus nidulans)).